The chain runs to 57 residues: Preprotein translocase subunit SecG (57 aa).

The Cytoplasmic portion of the chain corresponds to 1–33; the sequence is MARRRKYEGLNPFVAAGLIKFSEEGELERIKLN. The chain crosses the membrane as a helical span at residues 34–55; it reads PRTAILVSITVIIAILVLNILH. Over 56-57 the chain is Extracellular; it reads PL.

Belongs to the SEC61-beta family. Component of the protein translocase complex. Heterotrimer consisting of alpha (SecY), beta (SecG) and gamma (SecE) subunits. Can form oligomers of the heterotrimer.

The protein localises to the cell membrane. Involved in protein export. The function of the beta subunit is unknown, but it may be involved in stabilization of the trimeric complex. The polypeptide is Preprotein translocase subunit SecG (Pyrobaculum islandicum (strain DSM 4184 / JCM 9189 / GEO3)).